A 640-amino-acid polypeptide reads, in one-letter code: uncharacterized protein (640 aa).

In terms of domain architecture, TIR spans 184–328 (VKRDTIFIIK…KVQRSIDTMI (145 aa)). The tract at residues 613–640 (LPNDLDDEDEELDDSTLGRPDSDEEGGE) is disordered. Residues 616-626 (DLDDEDEELDD) are compositionally biased toward acidic residues.

This is an uncharacterized protein from Sinorhizobium fredii (strain NBRC 101917 / NGR234).